The primary structure comprises 621 residues: NADPH-dependent diflavin oxidoreductase 1 (621 aa).

Positions 6–168 (IAVLYGSETG…VYFEFEKRII (163 aa)) constitute a Flavodoxin-like domain. FMN-binding positions include 12-17 (SETGNA), 59-62 (STTG), 106-115 (LGDSSYPKFN), and Glu-142. The 266-residue stretch at 224–489 (KLIKTGTITL…VGPGVGLAPL (266 aa)) folds into the FAD-binding FR-type domain. FAD is bound by residues Arg-381, 411-414 (RLYS), and 443-446 (GVCT). Residues 536 to 537 (SR) and 545 to 549 (TKYVQ) contribute to the NADP(+) site. Trp-621 contributes to the FAD binding site.

The protein belongs to the NADPH-dependent diflavin oxidoreductase NDOR1 family. In the N-terminal section; belongs to the flavodoxin family. It in the C-terminal section; belongs to the flavoprotein pyridine nucleotide cytochrome reductase family. As to quaternary structure, interacts with DRE2; as part of the cytosolic iron-sulfur (Fe-S) protein assembly (CIA) machinery. Requires FAD as cofactor. FMN is required as a cofactor.

Its subcellular location is the cytoplasm. The protein localises to the mitochondrion. It catalyses the reaction 2 oxidized [2Fe-2S]-[protein] + NADPH = 2 reduced [2Fe-2S]-[protein] + NADP(+) + H(+). NADPH-dependent reductase which is a central component of the cytosolic iron-sulfur (Fe-S) protein assembly (CIA) machinery. Transfers electrons from NADPH via its FAD and FMN prosthetic groups to the [2Fe-2S] cluster of DRE2, another key component of the CIA machinery. In turn, this reduced cluster provides electrons for assembly of cytosolic iron-sulfur cluster proteins. Positively controls H(2)O(2)-induced cell death. The sequence is that of NADPH-dependent diflavin oxidoreductase 1 from Candida glabrata (strain ATCC 2001 / BCRC 20586 / JCM 3761 / NBRC 0622 / NRRL Y-65 / CBS 138) (Yeast).